We begin with the raw amino-acid sequence, 88 residues long: RNA-binding protein Hfq (88 aa).

The region spanning 9-68 (DPFLNALRCERIPVSIYLVNGIKLQGQIESFDQFVILLKNTVNQMVYKHAISTVVPARAV) is the Sm domain. The tract at residues 66–88 (RAVSHHTASDRPQGERPQETTEE) is disordered. Over residues 72 to 88 (TASDRPQGERPQETTEE) the composition is skewed to basic and acidic residues.

This sequence belongs to the Hfq family. In terms of assembly, homohexamer.

In terms of biological role, RNA chaperone that binds small regulatory RNA (sRNAs) and mRNAs to facilitate mRNA translational regulation in response to envelope stress, environmental stress and changes in metabolite concentrations. Also binds with high specificity to tRNAs. This Aliivibrio salmonicida (strain LFI1238) (Vibrio salmonicida (strain LFI1238)) protein is RNA-binding protein Hfq.